The following is a 208-amino-acid chain: Probable transcriptional regulator ycf29 (208 aa).

One can recognise a Response regulatory domain in the interval 11-118 (KLILIEPEEH…ELIAIISNLI (108 aa)). The residue at position 60 (D60) is a 4-aspartylphosphate. The region spanning 146–208 (TSFSYINLTV…NRIQILSYFN (63 aa)) is the HTH luxR-type domain.

It localises to the plastid. The protein localises to the chloroplast. The polypeptide is Probable transcriptional regulator ycf29 (ycf29) (Guillardia theta (Cryptophyte)).